Consider the following 207-residue polypeptide: MDKEKGLLIVLSGPSGVGKGTVRKKIFEDPTTSYKYSISMTTRHMREGEIDGVDYFFKTKEEFEALIKDDQFIEYAQYVGNYYGTPVQYVKDTMEEGHDVFLEIEVEGAKQVRKKFPDALFIFLAPPSLDDLRERLVGRGTESDEKIQSRVNEARKEVEMMNLYDYVVVNDEVELAKNRIQSIVEAEHLKRERIEAKYRKMLLEVKK.

Positions 6-185 (GLLIVLSGPS…AKNRIQSIVE (180 aa)) constitute a Guanylate kinase-like domain. 13-20 (GPSGVGKG) provides a ligand contact to ATP.

It belongs to the guanylate kinase family.

The protein resides in the cytoplasm. The enzyme catalyses GMP + ATP = GDP + ADP. Its function is as follows. Essential for recycling GMP and indirectly, cGMP. In Staphylococcus epidermidis (strain ATCC 35984 / DSM 28319 / BCRC 17069 / CCUG 31568 / BM 3577 / RP62A), this protein is Guanylate kinase.